A 439-amino-acid chain; its full sequence is tRNA-2-methylthio-N(6)-dimethylallyladenosine synthase (439 aa).

Positions 2 to 119 (KYIYIKTWGC…LPKMIDEVEK (118 aa)) constitute an MTTase N-terminal domain. [4Fe-4S] cluster contacts are provided by cysteine 11, cysteine 48, cysteine 82, cysteine 156, cysteine 160, and cysteine 163. The 233-residue stretch at 142–374 (KKKGYTADIS…QERINIQTML (233 aa)) folds into the Radical SAM core domain. The region spanning 377 to 439 (RKMFGSIQSV…HTHSLKGELF (63 aa)) is the TRAM domain.

This sequence belongs to the methylthiotransferase family. MiaB subfamily. In terms of assembly, monomer. It depends on [4Fe-4S] cluster as a cofactor.

It localises to the cytoplasm. The catalysed reaction is N(6)-dimethylallyladenosine(37) in tRNA + (sulfur carrier)-SH + AH2 + 2 S-adenosyl-L-methionine = 2-methylsulfanyl-N(6)-dimethylallyladenosine(37) in tRNA + (sulfur carrier)-H + 5'-deoxyadenosine + L-methionine + A + S-adenosyl-L-homocysteine + 2 H(+). Catalyzes the methylthiolation of N6-(dimethylallyl)adenosine (i(6)A), leading to the formation of 2-methylthio-N6-(dimethylallyl)adenosine (ms(2)i(6)A) at position 37 in tRNAs that read codons beginning with uridine. The protein is tRNA-2-methylthio-N(6)-dimethylallyladenosine synthase of Buchnera aphidicola subsp. Acyrthosiphon pisum (strain APS) (Acyrthosiphon pisum symbiotic bacterium).